The primary structure comprises 572 residues: Proline--tRNA ligase (572 aa).

It belongs to the class-II aminoacyl-tRNA synthetase family. ProS type 1 subfamily. Homodimer.

The protein localises to the cytoplasm. It carries out the reaction tRNA(Pro) + L-proline + ATP = L-prolyl-tRNA(Pro) + AMP + diphosphate. Its function is as follows. Catalyzes the attachment of proline to tRNA(Pro) in a two-step reaction: proline is first activated by ATP to form Pro-AMP and then transferred to the acceptor end of tRNA(Pro). As ProRS can inadvertently accommodate and process non-cognate amino acids such as alanine and cysteine, to avoid such errors it has two additional distinct editing activities against alanine. One activity is designated as 'pretransfer' editing and involves the tRNA(Pro)-independent hydrolysis of activated Ala-AMP. The other activity is designated 'posttransfer' editing and involves deacylation of mischarged Ala-tRNA(Pro). The misacylated Cys-tRNA(Pro) is not edited by ProRS. The polypeptide is Proline--tRNA ligase (Escherichia coli O9:H4 (strain HS)).